Consider the following 576-residue polypeptide: Proteinaceous RNase P 3 (576 aa).

Basic and acidic residues predominate over residues 65–75 (NRRSRHDDESP). The interval 65–88 (NRRSRHDDESPKNPNKKKKGNRNP) is disordered. PPR repeat units lie at residues 88 to 123 (PEKS…DIRL), 129 to 166 (QSLL…GISP), 167 to 201 (NESS…GGVS), and 204 to 238 (RLRT…GIVL). A PRORP domain is found at 335–570 (SSAGKCLSCD…KEESLRSWMC (236 aa)). Residues C340 and C343 each coordinate Zn(2+). Mn(2+)-binding residues include D402, D480, D481, and D499. Residues H553 and C570 each coordinate Zn(2+).

It belongs to the PPR family. P subfamily. Mg(2+) serves as cofactor. It depends on Mn(2+) as a cofactor.

It is found in the nucleus. It catalyses the reaction Endonucleolytic cleavage of RNA, removing 5'-extranucleotides from tRNA precursor.. In terms of biological role, endonuclease RNase P responsible for the 5' maturation of tRNA precursors. Also involved in the maturation of mRNA and small nucleolar RNA (snoRNA). This Arabidopsis thaliana (Mouse-ear cress) protein is Proteinaceous RNase P 3 (PRORP3).